Here is a 678-residue protein sequence, read N- to C-terminus: MHSHRQKWGRQTDIARVLDDIEHDLYLPQRLSLDGATGTDESHVQYGIVKDCSVLTCGCCISESLFNDLCRETSNKQTACPICQRENVRLLSAIKPLRDLARQIDFFRSTTGQGESESDELPAIVKTSPSSSSLSLTPSRSSSTAGLEADNKTLSDPTVKEKSSLLELFHIVASKMHNANTEVGSDHPLTTGTTRDQEEHTTKENYSSSLLEPNYDDHANWKILDNASNTRTVPIDNNFSLMSTDVTIPSTANYQTNSAHDLDEEKEYFFANCFPMYRKKFQFNTHPKFLGTKSKLFINQSISPDCTKFALITEHKWEIYSINPKDNSPQLVSCGKSSGEYGPNFNQLTEQSSSSLSTTSQASKKKKKNWSQRFCKLSNDFLIISGSQNILNVHDIHQNGKLIYTYVSRFPIRCIDIDPRSQIIAYGITGKDRHTGAEQALVVIQQITRNKVTLEPEFPPPITITLPYRDPINTIQLSHDAKYLTCSTALESRFLIISLQKINEPRLIMKSVRSIDTSLESEGITDTKLFPGNPNLMCITSTAFNSSPLVINTKITQINGVRTVAQPSMLIRVDEIGCKIHKCEISPRNDAIAFLDRNGSVYIMCAPTMMDNNEKRRTILVETVANAYRAYESATLRFNPEGNKLYILDRKGTFFVEDFAYGLPQSREITKCKQIFHK.

Disordered stretches follow at residues threonine 111–threonine 158 and alanine 179–leucine 211. The span at threonine 127–threonine 144 shows a compositional bias: low complexity. Positions alanine 149–threonine 158 are enriched in basic and acidic residues. Polar residues predominate over residues alanine 179–threonine 194.

Homodimer. Component of the plasma membrane SPS (SSY1-PTR3-SSY5) amino acid sensor complex. Interacts directly with SSY1 and SSY5. Post-translationally, hyperphosphorylated in response to extracellular amino acids and dependent on the amino acid sensor component SSY1. Phosphorylation is positively regulated by casein kinases YCK1 and YCK2, and negatively regulated by phosphatase PP2A regulatory subunit RTS1.

The protein localises to the cell membrane. Component of the SPS-sensor system, which regulates the expression of several amino acid-metabolizing enzymes and amino acid- and peptide-permeases in response to extracellular amino acid levels by controlling the activity of two transcription factors, STP1 and STP2. The polypeptide is SPS-sensor component PTR3 (PTR3) (Saccharomyces cerevisiae (strain ATCC 204508 / S288c) (Baker's yeast)).